Reading from the N-terminus, the 217-residue chain is Kunitz-type trypsin inhibitor-like 1 protein (217 aa).

An N-terminal signal peptide occupies residues 1 to 26; sequence MKPLSPLTLSFFLFVFITNLSLAFSN. 2 disulfides stabilise this stretch: Cys70-Cys115 and Cys168-Cys175. Asn191 carries an N-linked (GlcNAc...) asparagine glycan.

Belongs to the protease inhibitor I3 (leguminous Kunitz-type inhibitor) family. Expressed in roots, leaves, epidermal layers of elongating stems, meristems and in the vascular system.

It is found in the secreted. Its function is as follows. Might act as a protease inhibitor involved in plant defense responses. In Pisum sativum (Garden pea), this protein is Kunitz-type trypsin inhibitor-like 1 protein (PIP20-1).